The following is a 176-amino-acid chain: Telomerase RNA component interacting RNase (176 aa).

Positions 1–12 (MAARGRRAEPQG) are enriched in basic and acidic residues. The segment at 1-121 (MAARGRRAEP…TLSFVGKRRG (121 aa)) is disordered. Residues 45 to 56 (SGAGSSPVSGGV) show a composition bias toward low complexity. The span at 68–83 (LFKRKMEEEQRQRQEE) shows a compositional bias: basic and acidic residues. Residues 90–101 (RPDQSAAAAGPG) show a composition bias toward low complexity. Lys-146 bears the N6-acetyllysine mark.

As to quaternary structure, part of the telomerase RNA 3' end complex which contains about 488 proteins.

Its activity is regulated as follows. Zn(2+) inhibits the RNase activity while Mg(2+), Ca(2+), Mn(2+), K(+), Na(+), EDTA and EGTA show little effect on the exoribonuclease activity. In terms of biological role, exoribonuclease that is part of the telomerase RNA 3' end processing complex and which has the ability to cleave all four unpaired RNA nucleotides from the 5' end or 3' end with higher efficiency for purine bases. The sequence is that of Telomerase RNA component interacting RNase from Homo sapiens (Human).